The primary structure comprises 1252 residues: LRR receptor-like serine/threonine-protein kinase GSO2 (1252 aa).

An N-terminal signal peptide occupies residues 1 to 22; the sequence is MQQNSVLLALFFLCFSSGLGSG. Residues 23–876 lie on the Extracellular side of the membrane; it reads QPGQRDDLQT…QRSLSPKTVV (854 aa). N-linked (GlcNAc...) asparagine glycosylation is found at Asn-62, Asn-77, and Asn-117. 10 LRR repeats span residues 94–118, 120–143, 144–166, 168–190, 191–215, 217–239, 240–263, 265–286, 287–310, and 312–335; these read FNNL…LSNL, SSLE…LGSL, VNLK…TFGN, VNLQ…RFGR, LVQL…IGNC, SLAL…LNRL, KNLQ…LGDL, SIQY…RLTE, LANL…EFWR, and NQLE…ICSN. N-linked (GlcNAc...) asparagine glycosylation occurs at Asn-157. Asn-214 and Asn-229 each carry an N-linked (GlcNAc...) asparagine glycan. The N-linked (GlcNAc...) asparagine glycan is linked to Asn-299. The N-linked (GlcNAc...) asparagine glycan is linked to Asn-336. LRR repeat units lie at residues 337–360, 361–384, 386–408, 409–433, 435–456, 457–480, 481–504, 506–528, 529–552, 554–575, 577–599, 600–622, 623–648, 650–670, 671–695, 697–719, 720–743, 745–767, 768–792, 793–816, and 818–839; these read TSLK…ISNC, QSLK…LFQL, ELTN…ISNL, TNLQ…GFLG, LEIM…IGNC, TRLQ…IGRL, KDLT…LGNC, QMTV…FGFL, TALE…LINL, NLTR…LCGS, SYLS…LGKS, TNLD…TFGK, ISEL…GLCK, LTHI…WLGK, LPLL…IFSL, NILT…IGNL, QALN…IGKL, KLFE…IGQL, QDLQ…ISTL, PKLE…IGDM, and SLGY…QFSR. Asn-370, Asn-394, and Asn-407 each carry an N-linked (GlcNAc...) asparagine glycan. A glycan (N-linked (GlcNAc...) asparagine) is linked at Asn-455. N-linked (GlcNAc...) asparagine glycosylation is found at Asn-538, Asn-554, Asn-559, and Asn-566. The N-linked (GlcNAc...) asparagine glycan is linked to Asn-709. The N-linked (GlcNAc...) asparagine glycan is linked to Asn-780. The N-linked (GlcNAc...) asparagine glycan is linked to Asn-823. Residues 877–897 form a helical membrane-spanning segment; it reads IISAISSLAAIALMVLVIILF. The Cytoplasmic portion of the chain corresponds to 898 to 1252; it reads FKQNHDLFKK…YREMQTDTDK (355 aa). Residue Thr-945 is modified to Phosphothreonine. The Protein kinase domain occupies 948-1232; it reads LNEEFMIGSG…PSSRQASEYL (285 aa). ATP is bound by residues 954-962 and Lys-976; that span reads IGSGGSGKV. Phosphotyrosine occurs at positions 1024 and 1066. The Proton acceptor role is filled by Asp-1079. Ser-1114 carries the post-translational modification Phosphoserine. 2 positions are modified to phosphotyrosine: Tyr-1124 and Tyr-1131.

It belongs to the protein kinase superfamily. Ser/Thr protein kinase family. Interacts with CIF1 and CIF2. In terms of tissue distribution, mostly expressed in siliques, seeds, developing embryos and seedlings, detected in flower buds, but not in roots, leaves or stems.

The protein localises to the cell membrane. It catalyses the reaction L-seryl-[protein] + ATP = O-phospho-L-seryl-[protein] + ADP + H(+). The enzyme catalyses L-threonyl-[protein] + ATP = O-phospho-L-threonyl-[protein] + ADP + H(+). Functionally, together with GSO1, receptor-like serine/threonine-kinase required during the development of the epidermal surface in embryos and cotyledons. Involved in the nuclear division phase of megagametogenesis. In coordination with GSO2, regulates root growth through control of cell division and cell fate specification. Controls seedling root growth by modulating sucrose response after germination. Receptor of the peptide hormones CIF1 and CIF2 required for contiguous Casparian strip diffusion barrier formation in roots. This is LRR receptor-like serine/threonine-protein kinase GSO2 from Arabidopsis thaliana (Mouse-ear cress).